Reading from the N-terminus, the 67-residue chain is Large ribosomal subunit protein uL29 (67 aa).

This sequence belongs to the universal ribosomal protein uL29 family.

The chain is Large ribosomal subunit protein uL29 from Halorhodospira halophila (strain DSM 244 / SL1) (Ectothiorhodospira halophila (strain DSM 244 / SL1)).